We begin with the raw amino-acid sequence, 87 residues long: Cuticle protein 1 (87 aa).

Gln-1 is subject to Pyrrolidone carboxylic acid. Repeat copies occupy residues Tyr-5–Cys-20, Tyr-43–Cys-58, and Tyr-71–Cys-86. Cystine bridges form between Cys-14–Cys-20, Cys-52–Cys-58, and Cys-80–Cys-86.

This is Cuticle protein 1 from Blaberus craniifer (Death's head cockroach).